The chain runs to 1711 residues: Reverse gyrase (1711 aa).

The segment at 1–39 (MKAVYREMCPNCWGRISDERLVMRNPCEECLDEPVHADS) adopts an RG N-terminal-type zinc-finger fold. Positions 9, 12, 27, and 30 each coordinate Zn(2+). Residues Gln-89 and 106–113 (APTGMGKS) each bind ATP. The 164-residue stretch at 93 to 256 (VKRLLKGRSF…RLKKQMSRYL (164 aa)) folds into the Helicase ATP-binding domain. Residues 213-216 (DDVD) carry the DEAD box motif. The segment at 638-1711 (DLVRSALMIV…YSEIQRYVSG (1074 aa)) is topoisomerase I. The 164-residue stretch at 642–805 (SALMIVESPN…NIKRIEFHEV (164 aa)) folds into the Toprim domain. A Mg(2+)-binding site is contributed by Glu-648. Residues 722-751 (LKRCRDCGHQFVDWEKKGVCPRCGSTNVRD) form an RG C-terminal-type zinc finger. 4 residues coordinate Zn(2+): Cys-725, Cys-728, Cys-741, and Cys-744. Position 774 (Asp-774) interacts with Mg(2+). The Topo IA-type catalytic domain maps to 821–1709 (NENRVNAQIV…ELYSEIQRYV (889 aa)). One can recognise a DOD-type homing endonuclease domain in the interval 1160–1287 (VFGLVLGDGT…LSVYLYQIGI (128 aa)). Tyr-1452 acts as the O-(5'-phospho-DNA)-tyrosine intermediate in catalysis.

The protein in the N-terminal section; belongs to the DEAD box helicase family. DDVD subfamily. In the C-terminal section; belongs to the type IA topoisomerase family. Monomer. The cofactor is Zn(2+). Mg(2+) serves as cofactor. In terms of processing, this protein undergoes a protein self splicing that involves a post-translational excision of the intervening region (intein) followed by peptide ligation.

It localises to the cytoplasm. It carries out the reaction ATP + H2O = ADP + phosphate + H(+). Modifies the topological state of DNA by introducing positive supercoils in an ATP-dependent process, increasing the linking number in steps of +1. Binds to single-stranded DNA, transiently cleaves and then rejoins the ends, introducing a positive supercoil in the process. The scissile phosphodiester is attacked by the catalytic tyrosine of the enzyme, resulting in the formation of a DNA-(5'-phosphotyrosyl)-enzyme intermediate. Probably involved in rewinding DNA strands in regions of the chromosome that have opened up to allow replication, transcription, DNA repair and/or for DNA protection. This chain is Reverse gyrase, found in Thermococcus kodakarensis (strain ATCC BAA-918 / JCM 12380 / KOD1) (Pyrococcus kodakaraensis (strain KOD1)).